Reading from the N-terminus, the 355-residue chain is MNNNSIEYRKLEHLIVCDHCDVEYKKGTLLEDVELIHSGISNCDLDDIDTSIEIFGKKLNAPLIVAAITGGHPKAKEVNKNIAIAVEELNLGMGVGSQRAAISKSYLEDTYSVVRDHTSSLIIGNLGAVNFVEDSWDEEIISKSVEMIDADAMAIHFNPLQEAIQPEGDVNFKGLNILKEIISNYNKIHGKIPFIAKQVGEGFSKKDAIFLKEIGFDAIDVGGSGGTSWAAVELYRIKDEEQKNFSNQYFNWGIPTAASILEVNSAFSGPIIATGGIRTGIDIAKSISIGANCCGTALPILKAALKSSEAVTTVLERMIKELKTTMFLTGCNNINELKSARYILKGDLKNWKDQI.

9–10 (RK) contacts substrate. Residues 67-69 (AIT), serine 97, and asparagine 125 each bind FMN. 97-99 (SQR) serves as a coordination point for substrate. Position 161 (glutamine 161) interacts with substrate. Glutamate 162 contributes to the Mg(2+) binding site. FMN contacts are provided by residues lysine 197, threonine 227, 276–278 (GIR), and 297–298 (AL).

This sequence belongs to the IPP isomerase type 2 family. Homooctamer. Dimer of tetramers. Requires FMN as cofactor. NADPH is required as a cofactor. The cofactor is Mg(2+).

Its subcellular location is the cytoplasm. It carries out the reaction isopentenyl diphosphate = dimethylallyl diphosphate. Functionally, involved in the biosynthesis of isoprenoids. Catalyzes the 1,3-allylic rearrangement of the homoallylic substrate isopentenyl (IPP) to its allylic isomer, dimethylallyl diphosphate (DMAPP). This Methanococcus maripaludis (strain DSM 14266 / JCM 13030 / NBRC 101832 / S2 / LL) protein is Isopentenyl-diphosphate delta-isomerase.